Reading from the N-terminus, the 119-residue chain is Large ribosomal subunit protein uL18 (119 aa).

The protein belongs to the universal ribosomal protein uL18 family. In terms of assembly, part of the 50S ribosomal subunit; part of the 5S rRNA/L5/L18/L25 subcomplex. Contacts the 5S and 23S rRNAs.

This is one of the proteins that bind and probably mediate the attachment of the 5S RNA into the large ribosomal subunit, where it forms part of the central protuberance. The protein is Large ribosomal subunit protein uL18 of Borrelia recurrentis (strain A1).